We begin with the raw amino-acid sequence, 171 residues long: S-ribosylhomocysteine lyase (171 aa).

Fe cation-binding residues include His-54, His-58, and Cys-128.

Belongs to the LuxS family. As to quaternary structure, homodimer. It depends on Fe cation as a cofactor.

The catalysed reaction is S-(5-deoxy-D-ribos-5-yl)-L-homocysteine = (S)-4,5-dihydroxypentane-2,3-dione + L-homocysteine. In terms of biological role, involved in the synthesis of autoinducer 2 (AI-2) which is secreted by bacteria and is used to communicate both the cell density and the metabolic potential of the environment. The regulation of gene expression in response to changes in cell density is called quorum sensing. Catalyzes the transformation of S-ribosylhomocysteine (RHC) to homocysteine (HC) and 4,5-dihydroxy-2,3-pentadione (DPD). This chain is S-ribosylhomocysteine lyase, found in Salmonella typhi.